We begin with the raw amino-acid sequence, 601 residues long: Elongation factor 4 (601 aa).

The region spanning 5-187 is the tr-type G domain; that stretch reads ENIRNFCIVA…AIITTFPPPK (183 aa). Residues 17–22 and 134–137 each bind GTP; these read DHGKST and NKID.

It belongs to the TRAFAC class translation factor GTPase superfamily. Classic translation factor GTPase family. LepA subfamily.

It is found in the cell inner membrane. The catalysed reaction is GTP + H2O = GDP + phosphate + H(+). Its function is as follows. Required for accurate and efficient protein synthesis under certain stress conditions. May act as a fidelity factor of the translation reaction, by catalyzing a one-codon backward translocation of tRNAs on improperly translocated ribosomes. Back-translocation proceeds from a post-translocation (POST) complex to a pre-translocation (PRE) complex, thus giving elongation factor G a second chance to translocate the tRNAs correctly. Binds to ribosomes in a GTP-dependent manner. The polypeptide is Elongation factor 4 (Treponema denticola (strain ATCC 35405 / DSM 14222 / CIP 103919 / JCM 8153 / KCTC 15104)).